A 222-amino-acid chain; its full sequence is uncharacterized protein (222 aa).

Positions 43–73 form a coiled coil; that stretch reads SQNEEFEYEMERMLSILNEQTMDLTQLQSRI.

This is an uncharacterized protein from Rickettsia conorii (strain ATCC VR-613 / Malish 7).